We begin with the raw amino-acid sequence, 211 residues long: Suppressor of RNA silencing p3 (211 aa).

The protein belongs to the tenuiviruses p3 protein family. In terms of assembly, homodimer.

It is found in the host cytoplasm. Acts as a suppressor of RNA-mediated gene silencing, also known as post-transcriptional gene silencing (PTGS), presumably through the binding of dsRNA. The protein is Suppressor of RNA silencing p3 of Avena sativa (Oat).